A 422-amino-acid chain; its full sequence is O-mycaminosyltylonolide 6-deoxyallosyltransferase (422 aa).

It belongs to the glycosyltransferase 28 family.

The enzyme catalyses 5-O-beta-D-mycaminosyltylonolide + dTDP-6-deoxy-alpha-D-allose = demethyllactenocin + dTDP + H(+). In terms of biological role, involved in the biosynthesis of the macrolide antibiotic tylosin derived from the polyketide lactone tylactone. Catalyzes the transfer of 6-deoxy-alpha-D-allose from dTDP-6-deoxy-alpha-D-allose to O-mycaminosyltylonolide (OMT) to yield demethyllactenocin. The polypeptide is O-mycaminosyltylonolide 6-deoxyallosyltransferase (Streptomyces fradiae (Streptomyces roseoflavus)).